A 226-amino-acid chain; its full sequence is ATP-dependent dethiobiotin synthetase BioD (226 aa).

Residue 12-17 (GVGKTV) coordinates ATP. Thr16 serves as a coordination point for Mg(2+). Lys37 is an active-site residue. Thr41 is a binding site for substrate. ATP contacts are provided by residues Asp49, 108–111 (EGAG), and 169–170 (GS). Asp49 and Glu108 together coordinate Mg(2+).

The protein belongs to the dethiobiotin synthetase family. Homodimer. It depends on Mg(2+) as a cofactor.

It is found in the cytoplasm. The catalysed reaction is (7R,8S)-7,8-diammoniononanoate + CO2 + ATP = (4R,5S)-dethiobiotin + ADP + phosphate + 3 H(+). It participates in cofactor biosynthesis; biotin biosynthesis; biotin from 7,8-diaminononanoate: step 1/2. In terms of biological role, catalyzes a mechanistically unusual reaction, the ATP-dependent insertion of CO2 between the N7 and N8 nitrogen atoms of 7,8-diaminopelargonic acid (DAPA, also called 7,8-diammoniononanoate) to form a ureido ring. This chain is ATP-dependent dethiobiotin synthetase BioD, found in Mycobacterium marinum (strain ATCC BAA-535 / M).